Here is a 900-residue protein sequence, read N- to C-terminus: Serine-rich coiled-coil domain-containing protein 1 (900 aa).

Disordered regions lie at residues methionine 1 to methionine 100 and lysine 156 to arginine 178. A compositionally biased stretch (low complexity) spans leucine 29–threonine 56. Positions glutamate 81–methionine 100 are enriched in polar residues. The stretch at methionine 673–alanine 707 forms a coiled coil.

Belongs to the CCSER family.

The sequence is that of Serine-rich coiled-coil domain-containing protein 1 (CCSER1) from Homo sapiens (Human).